Here is a 769-residue protein sequence, read N- to C-terminus: Intron Large complex component GCFC2 (769 aa).

2 disordered regions span residues 1–122 (MALR…PIVE) and 134–212 (RKRE…DENQ). Phosphoserine is present on residues Ser16, Ser17, Ser19, and Ser85. Thr86 bears the Phosphothreonine mark. Phosphoserine occurs at positions 118 and 169. The segment covering 190 to 201 (RMAEETSIRSEE) has biased composition (basic and acidic residues). A compositionally biased stretch (acidic residues) spans 202 to 212 (SSEESQEDENQ). Residues Ser203 and Ser206 each carry the phosphoserine modification. Positions 256–308 (NLEIIKKQLNNRLTLLQESHRSHQREYEKYEQDIKSSKTAIQNLESASDHAQN) form a coiled coil.

The protein belongs to the GCF family. As to quaternary structure, found in the Intron Large (IL) complex, a post-mRNA release spliceosomal complex containing the excised intron, U2, U5 and U6 snRNPs, and splicing factors. Interacts with TFIP11 and DHX15.

The protein localises to the nucleus. It is found in the nucleoplasm. The protein resides in the nucleolus. Functionally, involved in pre-mRNA splicing through regulating spliceosome C complex formation. May play a role during late-stage splicing events and turnover of excised introns. The chain is Intron Large complex component GCFC2 (Gcfc2) from Mus musculus (Mouse).